Reading from the N-terminus, the 111-residue chain is Iron-sulfur cluster assembly protein CyaY (111 aa).

It belongs to the frataxin family.

Its function is as follows. Involved in iron-sulfur (Fe-S) cluster assembly. May act as a regulator of Fe-S biogenesis. The protein is Iron-sulfur cluster assembly protein CyaY of Cupriavidus metallidurans (strain ATCC 43123 / DSM 2839 / NBRC 102507 / CH34) (Ralstonia metallidurans).